The following is a 203-amino-acid chain: MSGILELEAKSRTEFGTGAARALRREGRVPAIIYGAGKTPISISLKEKEITKYYRKPAFISQLINLTIDKKQYKVLPKAVELHPVTDIVRHVDFVFLEAKTQKMEVPIVYEGKERALGVKRGGYFNIIKRRVILLCDVNNIPRNVTIDVTNMPIGTSLKSSQVELPKGCSFITKKEFVLATIIGRRGVKTEIEGEQEVAEAIQ.

It belongs to the bacterial ribosomal protein bL25 family. CTC subfamily. As to quaternary structure, part of the 50S ribosomal subunit; part of the 5S rRNA/L5/L18/L25 subcomplex. Contacts the 5S rRNA. Binds to the 5S rRNA independently of L5 and L18.

Functionally, this is one of the proteins that binds to the 5S RNA in the ribosome where it forms part of the central protuberance. This is Large ribosomal subunit protein bL25 from Rickettsia prowazekii (strain Madrid E).